Reading from the N-terminus, the 366-residue chain is Zinc-regulated GTPase metalloprotein activator 1 (366 aa).

Residues 5–12 carry the psi-PxLVp motif motif; the sequence is DECPELVP. 31 to 38 lines the GTP pocket; the sequence is GYLGAGKT. Zn(2+) contacts are provided by cysteine 89, cysteine 91, and cysteine 92. The short motif at 89 to 92 is the CXCC motif element; the sequence is CLCC. GTP-binding positions include 92 to 96 and 185 to 188; these read CSVKD and NKTD. In terms of domain architecture, CobW C-terminal spans 258–357; the sequence is TITFEVPGSV…GEILKKEFIS (100 aa).

Belongs to the SIMIBI class G3E GTPase family. ZNG1 subfamily.

Its subcellular location is the nucleus. It carries out the reaction GTP + H2O = GDP + phosphate + H(+). In terms of biological role, zinc chaperone that directly transfers zinc cofactor to target metalloproteins, thereby activating them. Catalyzes zinc insertion into the active site of methionine aminopeptidase METAP1, which function to cleave the initiator methionine from polypeptides during or after protein translation. Mechanistically, the N-terminal psi-PxLVp motif binds to the C6H2-type zinc finger of inactive form of METAP1. After formation of the docked complex, zinc is transferred from the CXCC motif in the GTPase domain of ZNG1 to the zinc binding site in the peptidase domain of METAP1 in a process requiring GTP hydrolysis. GTP/GDP exchange is required for release of active METAP1. The protein is Zinc-regulated GTPase metalloprotein activator 1 of Danio rerio (Zebrafish).